We begin with the raw amino-acid sequence, 431 residues long: Transmembrane protease serine 11C (431 aa).

Residues 1-33 are Cytoplasmic-facing; the sequence is MARGQPRRSEEQWTALQNRTECKTKIKLTRCGK. A helical; Signal-anchor for type II membrane protein transmembrane segment spans residues 34 to 54; that stretch reads ITLGILTAVLAAVLIGLIAYF. The Extracellular segment spans residues 55-431; it reads AACGKDSFYY…RDWITSKTGL (377 aa). The SEA domain occupies 60–177; that stretch reads DSFYYHVSFK…SSFKFSDIAM (118 aa). Asparagine 99 carries N-linked (GlcNAc...) asparagine glycosylation. The region spanning 200–430 is the Peptidase S1 domain; the sequence is VAGGQDAEEG…YRDWITSKTG (231 aa). Cysteine 225 and cysteine 241 are joined by a disulfide. Histidine 240 (charge relay system) is an active-site residue. Asparagine 276 carries N-linked (GlcNAc...) asparagine glycosylation. Residue aspartate 285 is the Charge relay system of the active site. A glycan (N-linked (GlcNAc...) asparagine) is linked at asparagine 347. 2 cysteine pairs are disulfide-bonded: cysteine 350–cysteine 366 and cysteine 377–cysteine 406. Catalysis depends on serine 381, which acts as the Charge relay system.

It belongs to the peptidase S1 family. In terms of processing, proteolytically cleaved via an autocatalytic mechanism. Expressed specifically in Purkinje neurons of the cerebellum (at protein level). Also detected in spinal cord.

It is found in the cell membrane. It localises to the cell projection. The protein resides in the dendrite. The protein localises to the perikaryon. In terms of biological role, serine protease which has a preference for Arg or Lys in position P1 and uncharged residues in positions P2 and P3. Shows specificity towards FGF2 in vitro. The polypeptide is Transmembrane protease serine 11C (Mus musculus (Mouse)).